The primary structure comprises 132 residues: Small ribosomal subunit protein uS9 (132 aa).

The interval Lys101 to Arg132 is disordered. Residues Lys113–Arg132 are compositionally biased toward basic residues.

Belongs to the universal ribosomal protein uS9 family.

The polypeptide is Small ribosomal subunit protein uS9 (Staphylococcus aureus (strain USA300)).